A 133-amino-acid chain; its full sequence is uncharacterized protein (133 aa).

Residues 11-31 form a helical membrane-spanning segment; sequence YFLISVFLIFIVSGITYFYST.

The protein resides in the membrane. This is an uncharacterized protein from Borreliella burgdorferi (strain ATCC 35210 / DSM 4680 / CIP 102532 / B31) (Borrelia burgdorferi).